Reading from the N-terminus, the 264-residue chain is Elongation factor Ts (264 aa).

The segment at 76 to 79 (TDFV) is involved in Mg(2+) ion dislocation from EF-Tu.

Belongs to the EF-Ts family.

The protein resides in the cytoplasm. In terms of biological role, associates with the EF-Tu.GDP complex and induces the exchange of GDP to GTP. It remains bound to the aminoacyl-tRNA.EF-Tu.GTP complex up to the GTP hydrolysis stage on the ribosome. In Deinococcus deserti (strain DSM 17065 / CIP 109153 / LMG 22923 / VCD115), this protein is Elongation factor Ts.